Reading from the N-terminus, the 241-residue chain is B9 domain-containing protein 1 (241 aa).

Positions M1–N42 are disordered. Residues E20–R34 show a composition bias toward basic residues. One can recognise a C2 B9-type domain in the interval F53–E197.

Belongs to the B9D family. In terms of assembly, probable component of the tectonic-like complex (also named MKS complex), composed of B9d1, B9d2, Cc2d2a, Mks1 and tctn. As to expression, expressed in type I sensory neurons (at protein level). Expressed in spermatids and spermatocytes (at protein level).

Its subcellular location is the cytoplasm. The protein localises to the cytoskeleton. It is found in the cilium basal body. Its function is as follows. Probable component of the tectonic-like complex (also named MKS complex), a complex localized at the transition zone of primary cilia. Required for ciliary structure and function. In Drosophila melanogaster (Fruit fly), this protein is B9 domain-containing protein 1.